Consider the following 152-residue polypeptide: Large ribosomal subunit protein bL9 (152 aa).

This sequence belongs to the bacterial ribosomal protein bL9 family.

Binds to the 23S rRNA. This chain is Large ribosomal subunit protein bL9, found in Rippkaea orientalis (strain PCC 8801 / RF-1) (Cyanothece sp. (strain PCC 8801)).